A 145-amino-acid polypeptide reads, in one-letter code: D-aminoacyl-tRNA deacylase (145 aa).

The short motif at G137 to P138 is the Gly-cisPro motif, important for rejection of L-amino acids element.

It belongs to the DTD family. In terms of assembly, homodimer.

It is found in the cytoplasm. The enzyme catalyses glycyl-tRNA(Ala) + H2O = tRNA(Ala) + glycine + H(+). The catalysed reaction is a D-aminoacyl-tRNA + H2O = a tRNA + a D-alpha-amino acid + H(+). In terms of biological role, an aminoacyl-tRNA editing enzyme that deacylates mischarged D-aminoacyl-tRNAs. Also deacylates mischarged glycyl-tRNA(Ala), protecting cells against glycine mischarging by AlaRS. Acts via tRNA-based rather than protein-based catalysis; rejects L-amino acids rather than detecting D-amino acids in the active site. By recycling D-aminoacyl-tRNA to D-amino acids and free tRNA molecules, this enzyme counteracts the toxicity associated with the formation of D-aminoacyl-tRNA entities in vivo and helps enforce protein L-homochirality. This chain is D-aminoacyl-tRNA deacylase, found in Pseudomonas fluorescens (strain SBW25).